Here is a 273-residue protein sequence, read N- to C-terminus: MGKLLRKPLNERIAPGVTLVQDINQGNSPLSYVGFRLIELEEDAVYQETLDGLECCIVALTGKISVSEGDHVFSEIGTRANVFEKIPTDSVFISGGRAFQVKADAEKARVALCYSPADRNLPTTLIKASDNSIEQRGKYQNKRLVHNILPDVSEVASSLLVVEVYTDGGNFSSYPPHKHDHDNLPAESLLEESYYHEINPKQGFIFQRVYTDDRALDETMAVEHQNAVIVPEGYHPVGVPDGYDSYYLNVMAGPKRVWEFHNDPDHEWILERD.

The protein belongs to the isomerase IolB family.

It carries out the reaction 5-deoxy-D-glucuronate = 5-dehydro-2-deoxy-D-gluconate. The protein operates within polyol metabolism; myo-inositol degradation into acetyl-CoA; acetyl-CoA from myo-inositol: step 4/7. In terms of biological role, involved in the isomerization of 5-deoxy-glucuronate (5DG) to 5-dehydro-2-deoxy-D-gluconate (DKG or 2-deoxy-5-keto-D-gluconate). This is 5-deoxy-glucuronate isomerase from Listeria monocytogenes serovar 1/2a (strain ATCC BAA-679 / EGD-e).